Consider the following 347-residue polypeptide: Protein-glutamate methylesterase/protein-glutamine glutaminase 3 (347 aa).

The region spanning 3–120 is the Response regulatory domain; it reads QVFIVDDSAV…KNFLEESEIL (118 aa). At aspartate 54 the chain carries 4-aspartylphosphate. The CheB-type methylesterase domain maps to 159 to 347; it reads IDTTDKLIAI…SKIVGEVQYF (189 aa). Active-site residues include serine 171, histidine 197, and aspartate 293.

The protein belongs to the CheB family. In terms of processing, phosphorylated by CheA. Phosphorylation of the N-terminal regulatory domain activates the methylesterase activity.

The protein resides in the cytoplasm. It carries out the reaction [protein]-L-glutamate 5-O-methyl ester + H2O = L-glutamyl-[protein] + methanol + H(+). It catalyses the reaction L-glutaminyl-[protein] + H2O = L-glutamyl-[protein] + NH4(+). Its function is as follows. Involved in chemotaxis. Part of a chemotaxis signal transduction system that modulates chemotaxis in response to various stimuli. Catalyzes the demethylation of specific methylglutamate residues introduced into the chemoreceptors (methyl-accepting chemotaxis proteins or MCP) by CheR. Also mediates the irreversible deamidation of specific glutamine residues to glutamic acid. This Leptospira interrogans serogroup Icterohaemorrhagiae serovar copenhageni (strain Fiocruz L1-130) protein is Protein-glutamate methylesterase/protein-glutamine glutaminase 3.